A 189-amino-acid chain; its full sequence is Peptidyl-tRNA hydrolase (189 aa).

Residue Y14 coordinates tRNA. H19 acts as the Proton acceptor in catalysis. Positions 64, 66, and 112 each coordinate tRNA.

Belongs to the PTH family. In terms of assembly, monomer.

The protein localises to the cytoplasm. The catalysed reaction is an N-acyl-L-alpha-aminoacyl-tRNA + H2O = an N-acyl-L-amino acid + a tRNA + H(+). Hydrolyzes ribosome-free peptidyl-tRNAs (with 1 or more amino acids incorporated), which drop off the ribosome during protein synthesis, or as a result of ribosome stalling. In terms of biological role, catalyzes the release of premature peptidyl moieties from peptidyl-tRNA molecules trapped in stalled 50S ribosomal subunits, and thus maintains levels of free tRNAs and 50S ribosomes. The sequence is that of Peptidyl-tRNA hydrolase from Finegoldia magna (strain ATCC 29328 / DSM 20472 / WAL 2508) (Peptostreptococcus magnus).